A 270-amino-acid polypeptide reads, in one-letter code: Bifunctional folate synthesis protein (270 aa).

Positions 1 to 119 (MDQLQIKDLE…TCSVTIHRRK (119 aa)) are DHNA. Residues Glu21, Tyr53, and 72–73 (IE) contribute to the substrate site. The active-site Proton donor/acceptor; for DHNA activity is Lys99. The interval 120 to 270 (QRAFIALGSN…IRNLYDALKK (151 aa)) is HPPK. Residues 160–163 (TEPW), 171–173 (FAN), 192–195 (LAIE), 200–215 (RVREVHWGPRLIDLDL), 227–233 (DLILPHP), and 238–240 (RLF) each bind ATP. 2 residues coordinate Mg(2+): Asp212 and Asp214.

The protein in the N-terminal section; belongs to the DHNA family. It in the C-terminal section; belongs to the HPPK family. In terms of assembly, homotrimer or homotetramer.

The catalysed reaction is 7,8-dihydroneopterin = 6-hydroxymethyl-7,8-dihydropterin + glycolaldehyde. It carries out the reaction 6-hydroxymethyl-7,8-dihydropterin + ATP = (7,8-dihydropterin-6-yl)methyl diphosphate + AMP + H(+). It functions in the pathway cofactor biosynthesis; tetrahydrofolate biosynthesis; 2-amino-4-hydroxy-6-hydroxymethyl-7,8-dihydropteridine diphosphate from 7,8-dihydroneopterin triphosphate: step 3/4. It participates in cofactor biosynthesis; tetrahydrofolate biosynthesis; 2-amino-4-hydroxy-6-hydroxymethyl-7,8-dihydropteridine diphosphate from 7,8-dihydroneopterin triphosphate: step 4/4. Its function is as follows. Catalyzes two sequential steps of tetrahydrofolate biosynthesis, the conversion of 7,8-dihydroneopterin to 6-hydroxymethyl-7,8-dihydropterin diphosphate. This chain is Bifunctional folate synthesis protein, found in Streptococcus pneumoniae serotype 4 (strain ATCC BAA-334 / TIGR4).